The sequence spans 522 residues: Calcium-dependent protein kinase 4 (522 aa).

Positions 1–10 (MGACFSSHTA) are enriched in polar residues. The segment at 1–43 (MGACFSSHTATAAADGGSGKRQQRKGDHKGKLPDGGGGEKEKE) is disordered. A lipid anchor (N-myristoyl glycine) is attached at Gly-2. The segment covering 29 to 43 (KGKLPDGGGGEKEKE) has biased composition (basic and acidic residues). Residues 59 to 319 (YQVGRLLGHG…AAQALSHPWV (261 aa)) enclose the Protein kinase domain. ATP contacts are provided by residues 65–73 (LGHGQFGYT) and Lys-88. The active-site Proton acceptor is Asp-185. An autoinhibitory domain region spans residues 325 to 355 (ASEIPVDISVLSNMRQFVKYSRFKQFALRAL). EF-hand domains are found at residues 362–397 (EELA…DLPW), 399–434 (LKGP…IHQM), 441–476 (RWGL…GLKG), and 481–508 (LLEE…ASMS). Ca(2+) contacts are provided by Asp-375, Asp-377, Ser-379, Ser-381, Glu-386, Asp-412, Asn-414, Asp-416, Glu-423, Asp-454, Asp-456, Asp-458, Tyr-460, Glu-465, Asp-486, Asp-488, Asp-490, Arg-492, and Glu-497.

It belongs to the protein kinase superfamily. Ser/Thr protein kinase family. CDPK subfamily.

The protein localises to the membrane. The catalysed reaction is L-seryl-[protein] + ATP = O-phospho-L-seryl-[protein] + ADP + H(+). It carries out the reaction L-threonyl-[protein] + ATP = O-phospho-L-threonyl-[protein] + ADP + H(+). With respect to regulation, activated by calcium. Autophosphorylation may play an important role in the regulation of the kinase activity. Functionally, may play a role in signal transduction pathways that involve calcium as a second messenger. The sequence is that of Calcium-dependent protein kinase 4 from Oryza sativa subsp. japonica (Rice).